A 258-amino-acid chain; its full sequence is Trans-aconitate 2-methyltransferase (258 aa).

It belongs to the methyltransferase superfamily. Tam family.

Its subcellular location is the cytoplasm. The catalysed reaction is trans-aconitate + S-adenosyl-L-methionine = (E)-3-(methoxycarbonyl)pent-2-enedioate + S-adenosyl-L-homocysteine. Its function is as follows. Catalyzes the S-adenosylmethionine monomethyl esterification of trans-aconitate. The protein is Trans-aconitate 2-methyltransferase of Acidovorax ebreus (strain TPSY) (Diaphorobacter sp. (strain TPSY)).